The sequence spans 99 residues: Large ribosomal subunit protein eL36 (99 aa).

This sequence belongs to the eukaryotic ribosomal protein eL36 family. As to quaternary structure, component of the large ribosomal subunit. Mature ribosomes consist of a small (40S) and a large (60S) subunit. The 40S subunit contains about 32 different proteins and 1 molecule of RNA (18S). The 60S subunit contains 45 different proteins and 3 molecules of RNA (25S, 5.8S and 5S).

The protein resides in the cytoplasm. Its function is as follows. Component of the ribosome, a large ribonucleoprotein complex responsible for the synthesis of proteins in the cell. The small ribosomal subunit (SSU) binds messenger RNAs (mRNAs) and translates the encoded message by selecting cognate aminoacyl-transfer RNA (tRNA) molecules. The large subunit (LSU) contains the ribosomal catalytic site termed the peptidyl transferase center (PTC), which catalyzes the formation of peptide bonds, thereby polymerizing the amino acids delivered by tRNAs into a polypeptide chain. The nascent polypeptides leave the ribosome through a tunnel in the LSU and interact with protein factors that function in enzymatic processing, targeting, and the membrane insertion of nascent chains at the exit of the ribosomal tunnel. This Candida albicans (strain SC5314 / ATCC MYA-2876) (Yeast) protein is Large ribosomal subunit protein eL36.